The chain runs to 37 residues: Large ribosomal subunit protein bL36 (37 aa).

Belongs to the bacterial ribosomal protein bL36 family.

This chain is Large ribosomal subunit protein bL36, found in Salinispora tropica (strain ATCC BAA-916 / DSM 44818 / JCM 13857 / NBRC 105044 / CNB-440).